Consider the following 185-residue polypeptide: MRVMGVDPGLTRCGLSMIESGKGRQVIALDVDVVRTPADTPLQKRLLTISDAAEHWMDTHRPDVIAIERVFANQNANTAMGTAQAGGVIALAAAKRDIEVHFHTPSEVKAAVTGSGRADKSQVTEMVTRILALQAKPTPADAADALALAICHCWRAPMIARMAAAEAMAEEQRRKFQAKIKAARG.

Active-site residues include D7, E68, and D141. Residues D7, E68, and D141 each coordinate Mg(2+).

The protein belongs to the RuvC family. In terms of assembly, homodimer which binds Holliday junction (HJ) DNA. The HJ becomes 2-fold symmetrical on binding to RuvC with unstacked arms; it has a different conformation from HJ DNA in complex with RuvA. In the full resolvosome a probable DNA-RuvA(4)-RuvB(12)-RuvC(2) complex forms which resolves the HJ. Mg(2+) is required as a cofactor.

It localises to the cytoplasm. It catalyses the reaction Endonucleolytic cleavage at a junction such as a reciprocal single-stranded crossover between two homologous DNA duplexes (Holliday junction).. Functionally, the RuvA-RuvB-RuvC complex processes Holliday junction (HJ) DNA during genetic recombination and DNA repair. Endonuclease that resolves HJ intermediates. Cleaves cruciform DNA by making single-stranded nicks across the HJ at symmetrical positions within the homologous arms, yielding a 5'-phosphate and a 3'-hydroxyl group; requires a central core of homology in the junction. The consensus cleavage sequence is 5'-(A/T)TT(C/G)-3'. Cleavage occurs on the 3'-side of the TT dinucleotide at the point of strand exchange. HJ branch migration catalyzed by RuvA-RuvB allows RuvC to scan DNA until it finds its consensus sequence, where it cleaves and resolves the cruciform DNA. The chain is Crossover junction endodeoxyribonuclease RuvC from Mycolicibacterium smegmatis (strain ATCC 700084 / mc(2)155) (Mycobacterium smegmatis).